A 750-amino-acid chain; its full sequence is Methylmalonyl-CoA mutase, mitochondrial (750 aa).

The N-terminal 32 residues, 1 to 32 (MLRAKNQLFLLSPHYLKQVKESSGSRLIQQRL), are a transit peptide targeting the mitochondrion. Gln50 serves as a coordination point for malonyl-CoA. Position 89 is an N6-acetyllysine (Lys89). Malonyl-CoA is bound by residues 96 to 99 (YPTM) and 106 to 110 (TIRQY). Lys212 bears the N6-acetyllysine mark. Malonyl-CoA-binding positions include 216–218 (TIQ), Arg228, Lys255, His265, and 304–306 (RLS). Lys335 carries the N6-acetyllysine modification. Lys343 is subject to N6-succinyllysine. Position 481 is a phosphoserine (Ser481). The residue at position 595 (Lys595) is an N6-succinyllysine. Position 602 is an N6-acetyllysine (Lys602). The B12-binding domain maps to 614 to 746 (RPRLLVAKMG…DDIEKCLEKK (133 aa)). An adenosylcob(III)alamin-binding site is contributed by His627.

The protein belongs to the methylmalonyl-CoA mutase family. Homodimer. Interacts (the apoenzyme form) with MMAA; the interaction is GTP dependent. Adenosylcob(III)alamin is required as a cofactor.

Its subcellular location is the mitochondrion matrix. The protein localises to the mitochondrion. The protein resides in the cytoplasm. The enzyme catalyses (R)-methylmalonyl-CoA = succinyl-CoA. Its activity is regulated as follows. Inhibited by itaconyl-CoA, a metabolite that inactivates the coenzyme B12 cofactor. Functionally, catalyzes the reversible isomerization of methylmalonyl-CoA (MMCoA) (generated from branched-chain amino acid metabolism and degradation of dietary odd chain fatty acids and cholesterol) to succinyl-CoA (3-carboxypropionyl-CoA), a key intermediate of the tricarboxylic acid cycle. The protein is Methylmalonyl-CoA mutase, mitochondrial (MMUT) of Pongo abelii (Sumatran orangutan).